The sequence spans 152 residues: Acidic phospholipase A2 (152 aa).

The N-terminal stretch at M1 to S21 is a signal peptide. The propeptide occupies I22–L27. 7 disulfides stabilise this stretch: C38-C104, C54-C151, C56-C72, C71-C132, C78-C125, C88-C118, and C111-C123. Ca(2+) is bound by residues Y55, G57, and G59. H75 is an active-site residue. D76 provides a ligand contact to Ca(2+). D126 is an active-site residue.

This sequence belongs to the phospholipase A2 family. Group I subfamily. D49 sub-subfamily. The cofactor is Ca(2+). Expressed by the venom gland.

It is found in the secreted. It carries out the reaction a 1,2-diacyl-sn-glycero-3-phosphocholine + H2O = a 1-acyl-sn-glycero-3-phosphocholine + a fatty acid + H(+). Functionally, PLA2 catalyzes the calcium-dependent hydrolysis of the 2-acyl groups in 3-sn-phosphoglycerides. This chain is Acidic phospholipase A2, found in Ophiophagus hannah (King cobra).